The chain runs to 176 residues: Salivary antigen 1 (176 aa).

Residues 1 to 18 form the signal peptide; the sequence is MNYCFLVFLVYLVFAVNG.

It localises to the secreted. The sequence is that of Salivary antigen 1 from Ctenocephalides felis (Cat flea).